The chain runs to 1378 residues: DNA-directed RNA polymerase subunit beta (1378 aa).

This sequence belongs to the RNA polymerase beta chain family. In terms of assembly, the RNAP catalytic core consists of 2 alpha, 1 beta, 1 beta' and 1 omega subunit. When a sigma factor is associated with the core the holoenzyme is formed, which can initiate transcription.

It carries out the reaction RNA(n) + a ribonucleoside 5'-triphosphate = RNA(n+1) + diphosphate. Its function is as follows. DNA-dependent RNA polymerase catalyzes the transcription of DNA into RNA using the four ribonucleoside triphosphates as substrates. The chain is DNA-directed RNA polymerase subunit beta from Dinoroseobacter shibae (strain DSM 16493 / NCIMB 14021 / DFL 12).